The sequence spans 491 residues: Proline--tRNA ligase (491 aa).

It belongs to the class-II aminoacyl-tRNA synthetase family. ProS type 3 subfamily. As to quaternary structure, homodimer.

Its subcellular location is the cytoplasm. It carries out the reaction tRNA(Pro) + L-proline + ATP = L-prolyl-tRNA(Pro) + AMP + diphosphate. In terms of biological role, catalyzes the attachment of proline to tRNA(Pro) in a two-step reaction: proline is first activated by ATP to form Pro-AMP and then transferred to the acceptor end of tRNA(Pro). In Cytophaga hutchinsonii (strain ATCC 33406 / DSM 1761 / CIP 103989 / NBRC 15051 / NCIMB 9469 / D465), this protein is Proline--tRNA ligase.